The sequence spans 289 residues: ATP synthase subunit a (289 aa).

Helical transmembrane passes span 43–63 (AFHV…LFIF), 104–124 (IAPL…IDLV), 160–180 (ISVF…GGFL), 193–213 (IVVQ…TLIA), 232–252 (IFIL…ALGV), and 259–279 (AVFH…LTIV).

This sequence belongs to the ATPase A chain family. As to quaternary structure, F-type ATPases have 2 components, CF(1) - the catalytic core - and CF(0) - the membrane proton channel. CF(1) has five subunits: alpha(3), beta(3), gamma(1), delta(1), epsilon(1). CF(0) has three main subunits: a(1), b(2) and c(9-12). The alpha and beta chains form an alternating ring which encloses part of the gamma chain. CF(1) is attached to CF(0) by a central stalk formed by the gamma and epsilon chains, while a peripheral stalk is formed by the delta and b chains.

It localises to the cell inner membrane. Key component of the proton channel; it plays a direct role in the translocation of protons across the membrane. This chain is ATP synthase subunit a, found in Pseudomonas paraeruginosa (strain DSM 24068 / PA7) (Pseudomonas aeruginosa (strain PA7)).